A 644-amino-acid polypeptide reads, in one-letter code: Far upstream element-binding protein 1 (644 aa).

2 disordered regions span residues 1–31 and 44–94; these read MADY…NDAF and KIGG…PMHQ. Residue Ala2 is modified to N-acetylalanine. Over residues 14–27 the composition is skewed to gly residues; the sequence is SAGGGGGGGGGGGV. Phosphoserine is present on residues Ser52 and Ser55. Residues 65-77 show a composition bias toward basic and acidic residues; it reads RPLEDGDQPDAKK. Over residues 81 to 94 the composition is skewed to polar residues; the sequence is QNDSFGTQLPPMHQ. KH domains lie at 100–164, 185–251, and 275–339; these read VMTE…KRLL, NAVQ…KEMV, and NEGI…AEII. Phosphoserine is present on Ser140. Thr153 is subject to Phosphothreonine. Residues Arg321, Arg359, Arg361, and Arg363 each carry the omega-N-methylarginine modification. A disordered region spans residues 346-365; sequence VQAGNPGGPGPGGRGRGRGQ. The span at 350–365 shows a compositional bias: gly residues; that stretch reads NPGGPGPGGRGRGRGQ. The KH 4 domain occupies 376 to 443; that stretch reads LQEFNFIVPT…QQIDYARQLI (68 aa). Thr432 carries the post-translational modification Phosphothreonine. 2 disordered regions span residues 447–532 and 548–580; these read IGGP…GTDP and QAQP…AGQV. The segment covering 468-505 has biased composition (pro residues); it reads PHGPPGPPGPGTPMGPYNPAPYNPGPPGPAPHGPPAPY. A compositionally biased stretch (low complexity) spans 556-573; sequence PAGAPTTTQTNGQGDQQN. Position 630 is a phosphoserine (Ser630).

Found in a complex with PUF60 and far upstream element (FUSE) DNA segment. Interacts with PUF60 and JTV1. In terms of processing, ubiquitinated. This targets the protein for proteasome-mediated degradation.

It localises to the nucleus. Functionally, regulates MYC expression by binding to a single-stranded far-upstream element (FUSE) upstream of the MYC promoter. May act both as activator and repressor of transcription. The sequence is that of Far upstream element-binding protein 1 (FUBP1) from Homo sapiens (Human).